Consider the following 554-residue polypeptide: 3-(3-hydroxy-phenyl)propionate/3-hydroxycinnamic acid hydroxylase (554 aa).

FAD contacts are provided by residues 17 to 46 and 285 to 295; these read QVAI…VVEK and FRINRVLLAGD.

Belongs to the PheA/TfdB FAD monooxygenase family. It depends on FAD as a cofactor.

The catalysed reaction is 3-(3-hydroxyphenyl)propanoate + NADH + O2 + H(+) = 3-(2,3-dihydroxyphenyl)propanoate + NAD(+) + H2O. It carries out the reaction (2E)-3-(3-hydroxyphenyl)prop-2-enoate + NADH + O2 + H(+) = (2E)-3-(2,3-dihydroxyphenyl)prop-2-enoate + NAD(+) + H2O. It participates in aromatic compound metabolism; 3-phenylpropanoate degradation. Catalyzes the insertion of one atom of molecular oxygen into position 2 of the phenyl ring of 3-(3-hydroxyphenyl)propionate (3-HPP) and hydroxycinnamic acid (3HCI). This Klebsiella pneumoniae subsp. pneumoniae (strain ATCC 700721 / MGH 78578) protein is 3-(3-hydroxy-phenyl)propionate/3-hydroxycinnamic acid hydroxylase.